The following is a 333-amino-acid chain: Putative transporter MamV (333 aa).

5 helical membrane-spanning segments follow: residues 19–39, 86–106, 111–131, 170–190, and 191–211; these read AWLD…LGVL, FLSA…MLWY, LGSG…LISA, VLAG…LAAI, and LVSL…IHGL.

This sequence belongs to the cation diffusion facilitator (CDF) transporter (TC 2.A.4) family.

The protein localises to the cell inner membrane. Its function is as follows. Expression of just the minimal mamAB gene cluster (amb0961 to amb0978), including this gene, is sufficient to form a minimal magnetosome chain with small magnetite particles. The sequence is that of Putative transporter MamV from Paramagnetospirillum magneticum (strain ATCC 700264 / AMB-1) (Magnetospirillum magneticum).